The sequence spans 124 residues: Small ribosomal subunit protein uS12 (124 aa).

The segment at 1 to 32 is disordered; that stretch reads MPTIQQLVRKGREDKVVKTKTPALKGSPQRRG. A 3-methylthioaspartic acid modification is found at Asp89. The disordered stretch occupies residues 105–124; the sequence is QGVKNRKQARSRYGAKKEKS. A compositionally biased stretch (basic residues) spans 108-118; that stretch reads KNRKQARSRYG.

The protein belongs to the universal ribosomal protein uS12 family. As to quaternary structure, part of the 30S ribosomal subunit. Contacts proteins S8 and S17. May interact with IF1 in the 30S initiation complex.

Its function is as follows. With S4 and S5 plays an important role in translational accuracy. Interacts with and stabilizes bases of the 16S rRNA that are involved in tRNA selection in the A site and with the mRNA backbone. Located at the interface of the 30S and 50S subunits, it traverses the body of the 30S subunit contacting proteins on the other side and probably holding the rRNA structure together. The combined cluster of proteins S8, S12 and S17 appears to hold together the shoulder and platform of the 30S subunit. This is Small ribosomal subunit protein uS12 from Kineococcus radiotolerans (strain ATCC BAA-149 / DSM 14245 / SRS30216).